The primary structure comprises 156 residues: Small ribosomal subunit protein uS7 (156 aa).

The protein belongs to the universal ribosomal protein uS7 family. Part of the 30S ribosomal subunit. Contacts proteins S9 and S11.

Its function is as follows. One of the primary rRNA binding proteins, it binds directly to 16S rRNA where it nucleates assembly of the head domain of the 30S subunit. Is located at the subunit interface close to the decoding center, probably blocks exit of the E-site tRNA. This Hyphomonas neptunium (strain ATCC 15444) protein is Small ribosomal subunit protein uS7.